Reading from the N-terminus, the 117-residue chain is Prefoldin subunit beta (117 aa).

The protein belongs to the prefoldin subunit beta family. As to quaternary structure, heterohexamer of two alpha and four beta subunits.

The protein resides in the cytoplasm. In terms of biological role, molecular chaperone capable of stabilizing a range of proteins. Seems to fulfill an ATP-independent, HSP70-like function in archaeal de novo protein folding. The chain is Prefoldin subunit beta from Methanosarcina mazei (strain ATCC BAA-159 / DSM 3647 / Goe1 / Go1 / JCM 11833 / OCM 88) (Methanosarcina frisia).